Here is a 206-residue protein sequence, read N- to C-terminus: dITP/XTP pyrophosphatase (206 aa).

10–15 (SGNAGK) provides a ligand contact to substrate. Mg(2+) contacts are provided by Glu-40 and Asp-69. Residue Asp-69 is the Proton acceptor of the active site. Residues Ser-70, 148–151 (FGYD), Lys-171, and 176–177 (HR) contribute to the substrate site.

The protein belongs to the HAM1 NTPase family. As to quaternary structure, homodimer. It depends on Mg(2+) as a cofactor.

The enzyme catalyses XTP + H2O = XMP + diphosphate + H(+). It catalyses the reaction dITP + H2O = dIMP + diphosphate + H(+). It carries out the reaction ITP + H2O = IMP + diphosphate + H(+). In terms of biological role, pyrophosphatase that catalyzes the hydrolysis of nucleoside triphosphates to their monophosphate derivatives, with a high preference for the non-canonical purine nucleotides XTP (xanthosine triphosphate), dITP (deoxyinosine triphosphate) and ITP. Seems to function as a house-cleaning enzyme that removes non-canonical purine nucleotides from the nucleotide pool, thus preventing their incorporation into DNA/RNA and avoiding chromosomal lesions. This Synechococcus sp. (strain CC9311) protein is dITP/XTP pyrophosphatase.